Consider the following 47-residue polypeptide: Antimicrobial peptide LCI (47 aa).

The protein resides in the secreted. Its function is as follows. Has antibacterial activity against X.oryzae pv oryzae and R.solanacearum, but not E.coli or P.carotovorum subsp carotovorum. May bind DNA or mRNA. This Bacillus subtilis protein is Antimicrobial peptide LCI.